The primary structure comprises 414 residues: MLVIEDVRAYEVLDSRGNPTVKAEVTLSDGSVGAAIVPSGASTGSKEALELRDNDERFGGKGVLKAVANVNETIADEILGLDAFNQTQLDDTLRELDGTNNYSNLGANATLGVSMATARAAAAALGMPLYRYLGGANASILPVPMCNIINGGAHANNNVDFQEFMIMPFGFTSFKEALRSVCEIYVILKKELANSGHSTALGDEGGFAPNLANNTEPIDLLMTCIKKAGYENRVKIALDVASTEFFKDGKYHMEGKAFSSEDLIERYVELCAKYPICSIEDGLAENDFEGWIKLTEKLGNKIQLVGDDLFVTNEDILREGIIKKMANAVLIKPNQIGTITQTMRTVRLAQRNNYKCVMSHRSGESEDAFIADFAVALNTGQIKTGALARGERTAKYNRLLEIELESDEYLGEKL.

Gln-162 serves as a coordination point for (2R)-2-phosphoglycerate. Glu-204 functions as the Proton donor in the catalytic mechanism. Residues Asp-239, Glu-280, and Asp-307 each coordinate Mg(2+). (2R)-2-phosphoglycerate contacts are provided by Lys-332, Arg-361, Ser-362, and Lys-383. Lys-332 acts as the Proton acceptor in catalysis.

Belongs to the enolase family. The cofactor is Mg(2+).

It localises to the cytoplasm. The protein resides in the secreted. The protein localises to the cell surface. It carries out the reaction (2R)-2-phosphoglycerate = phosphoenolpyruvate + H2O. It functions in the pathway carbohydrate degradation; glycolysis; pyruvate from D-glyceraldehyde 3-phosphate: step 4/5. Catalyzes the reversible conversion of 2-phosphoglycerate (2-PG) into phosphoenolpyruvate (PEP). It is essential for the degradation of carbohydrates via glycolysis. This is Enolase from Campylobacter jejuni (strain RM1221).